The sequence spans 341 residues: Large ribosomal subunit protein uL10 (341 aa).

A disordered region spans residues 301-341 (EAAPAAAPAAEEKAEEEKKEEEEEKKEDQELSGLDSIFGGF).

It belongs to the universal ribosomal protein uL10 family. As to quaternary structure, part of the 50S ribosomal subunit. Forms part of the ribosomal stalk which helps the ribosome interact with GTP-bound translation factors. Forms a heptameric L10(L12)2(L12)2(L12)2 complex, where L10 forms an elongated spine to which the L12 dimers bind in a sequential fashion.

Functionally, forms part of the ribosomal stalk, playing a central role in the interaction of the ribosome with GTP-bound translation factors. In Aeropyrum pernix (strain ATCC 700893 / DSM 11879 / JCM 9820 / NBRC 100138 / K1), this protein is Large ribosomal subunit protein uL10.